Consider the following 1086-residue polypeptide: Formin-like protein 2 (1086 aa).

Gly-2 carries N-myristoyl glycine lipidation. The region spanning 23-469 (LPMPEPGELE…EAIQRQSTLE (447 aa)) is the GBD/FH3 domain. Ser-188 is subject to Phosphoserine. The segment at 513-597 (SVGPTMGAAS…APPLPSAPPL (85 aa)) is disordered. Positions 525–537 (PLPPPPPPLPPSS) are enriched in pro residues. Residues 538–547 (DTPETVQNGP) are compositionally biased toward polar residues. 2 stretches are compositionally biased toward pro residues: residues 548-576 (VTPP…PLPG) and 583-597 (PAPP…APPL). One can recognise an FH2 domain in the interval 616-1007 (IKKPIKTKFR…LMEKLLEQEA (392 aa)). The region spanning 1040-1079 (NRHVYEGKDGAIEDIITVLKTVPFTARTAKRGSRFFCEPV) is the DAD domain.

Belongs to the formin homology family.

The protein localises to the cytoplasm. Functionally, plays a role in the regulation of cell morphology and cytoskeletal organization. Required in the cortical actin filament dynamics. The polypeptide is Formin-like protein 2 (Homo sapiens (Human)).